We begin with the raw amino-acid sequence, 336 residues long: Isopentenyl-diphosphate delta-isomerase (336 aa).

Residue 5–6 (RK) participates in substrate binding. Residues 60-62 (AMT), S90, and N117 contribute to the FMN site. A substrate-binding site is contributed by Q147. Mg(2+) is bound at residue E148. Residues K179, S204, T209, 253–255 (GVR), and 274–275 (SR) contribute to the FMN site.

Belongs to the IPP isomerase type 2 family. Homooctamer. Dimer of tetramers. FMN is required as a cofactor. NADPH serves as cofactor. It depends on Mg(2+) as a cofactor.

The protein resides in the cytoplasm. It carries out the reaction isopentenyl diphosphate = dimethylallyl diphosphate. Functionally, involved in the biosynthesis of isoprenoids. Catalyzes the 1,3-allylic rearrangement of the homoallylic substrate isopentenyl (IPP) to its allylic isomer, dimethylallyl diphosphate (DMAPP). The sequence is that of Isopentenyl-diphosphate delta-isomerase from Streptococcus pneumoniae (strain 70585).